The primary structure comprises 352 residues: Maleylacetate reductase (352 aa).

It belongs to the iron-containing alcohol dehydrogenase family.

It catalyses the reaction 3-oxoadipate + NAD(+) = maleylacetate + NADH + H(+). The enzyme catalyses 3-oxoadipate + NADP(+) = maleylacetate + NADPH + H(+). It participates in aromatic compound metabolism; 3-chlorocatechol degradation. The polypeptide is Maleylacetate reductase (clcE) (Pseudomonas aeruginosa).